The following is a 245-amino-acid chain: Small ribosomal subunit protein uS2 (245 aa).

It belongs to the universal ribosomal protein uS2 family.

This is Small ribosomal subunit protein uS2 from Pseudomonas entomophila (strain L48).